Reading from the N-terminus, the 2278-residue chain is Protein Ycf2 (2278 aa).

1632–1639 (GSIGTGRS) contributes to the ATP binding site.

This sequence belongs to the Ycf2 family.

It localises to the plastid. Its subcellular location is the chloroplast stroma. In terms of biological role, probable ATPase of unknown function. Its presence in a non-photosynthetic plant (Epifagus virginiana) and experiments in tobacco indicate that it has an essential function which is probably not related to photosynthesis. The chain is Protein Ycf2 from Solanum bulbocastanum (Wild potato).